Here is a 405-residue protein sequence, read N- to C-terminus: uncharacterized protein (405 aa).

Helical transmembrane passes span 19 to 39 (IVSI…PLAV), 47 to 67 (VMGF…FATL), 85 to 105 (IVVF…TAGL), 107 to 127 (ASLP…LGIG), 156 to 176 (GIVT…FYHW), 178 to 198 (GLQA…LLAI), 224 to 244 (GMAL…ITLF), 252 to 272 (GAAF…LLFP), 283 to 303 (VAMI…VATM), 309 to 329 (IGVL…GVVA), 344 to 364 (TYTV…GLVM), and 366 to 386 (WAGV…ALLL).

This sequence belongs to the major facilitator superfamily. YhhS family.

It localises to the cell inner membrane. This is an uncharacterized protein from Shigella flexneri.